The following is a 155-amino-acid chain: Cytochrome c-type biogenesis protein CcmE (155 aa).

Residues 1 to 8 are Cytoplasmic-facing; sequence MNPVRKKR. The chain crosses the membrane as a helical; Signal-anchor for type II membrane protein span at residues 9–29; sequence LFIVLAILAGVGIAVALALSA. The Periplasmic portion of the chain corresponds to 30 to 155; it reads LQQNINLFYT…YEGGKQEYAK (126 aa). The heme site is built by H124 and Y128.

The protein belongs to the CcmE/CycJ family.

The protein localises to the cell inner membrane. Its function is as follows. Heme chaperone required for the biogenesis of c-type cytochromes. Transiently binds heme delivered by CcmC and transfers the heme to apo-cytochromes in a process facilitated by CcmF and CcmH. This is Cytochrome c-type biogenesis protein CcmE from Stutzerimonas stutzeri (strain A1501) (Pseudomonas stutzeri).